We begin with the raw amino-acid sequence, 580 residues long: Glutathione hydrolase proenzyme (580 aa).

The N-terminal stretch at 1 to 25 (MIKPTFLRRVAIAALLSGSCFSAAA) is a signal peptide. Residue Arg114 coordinates L-glutamate. Thr391 (nucleophile) is an active-site residue. L-glutamate is bound by residues Thr409, Asn411, Gln430, Asp433, 462-463 (SS), and 483-484 (GG). The tract at residues 561–580 (DGELYGASDPRSVDDLTAGY) is disordered.

The protein belongs to the gamma-glutamyltransferase family. As to quaternary structure, this enzyme consists of two polypeptide chains, which are synthesized in precursor form from a single polypeptide. In terms of processing, cleaved by autocatalysis into a large and a small subunit.

It localises to the periplasm. It catalyses the reaction an N-terminal (5-L-glutamyl)-[peptide] + an alpha-amino acid = 5-L-glutamyl amino acid + an N-terminal L-alpha-aminoacyl-[peptide]. The enzyme catalyses glutathione + H2O = L-cysteinylglycine + L-glutamate. The catalysed reaction is an S-substituted glutathione + H2O = an S-substituted L-cysteinylglycine + L-glutamate. It functions in the pathway sulfur metabolism; glutathione metabolism. Its activity is regulated as follows. Transferase and hydrolase activities are inhibited by L-Ala and L-Gln, and also by GGT affinity labeling reagents such as azaserine and 6-diazo-5-oxo-nor-leucine. In terms of biological role, cleaves the gamma-glutamyl bond of periplasmic glutathione (gamma-Glu-Cys-Gly), glutathione conjugates, and other gamma-glutamyl compounds. The metabolism of glutathione releases free glutamate and the dipeptide cysteinyl-glycine, which is hydrolyzed to cysteine and glycine by dipeptidases; it may function in amino acid uptake/salvage, or possibly in peptidoglycan linkage. Catalyzes the hydrolysis and transpeptidation of many gamma-glutamyl compounds (including some D-gamma-glutamyl substrates), with a preference for basic and aromatic amino acids as acceptors. The KM values for gamma-glutamyl acceptors are so high that it has been proposed transpeptidation is not the physiological role in E.coli. This Escherichia coli (strain K12) protein is Glutathione hydrolase proenzyme (ggt).